The primary structure comprises 100 residues: Urease subunit gamma (100 aa).

The protein belongs to the urease gamma subunit family. In terms of assembly, heterotrimer of UreA (gamma), UreB (beta) and UreC (alpha) subunits. Three heterotrimers associate to form the active enzyme.

It is found in the cytoplasm. It carries out the reaction urea + 2 H2O + H(+) = hydrogencarbonate + 2 NH4(+). Its pathway is nitrogen metabolism; urea degradation; CO(2) and NH(3) from urea (urease route): step 1/1. The polypeptide is Urease subunit gamma (Saccharophagus degradans (strain 2-40 / ATCC 43961 / DSM 17024)).